The sequence spans 495 residues: Lysine--tRNA ligase (495 aa).

Glu406 and Glu413 together coordinate Mg(2+).

Belongs to the class-II aminoacyl-tRNA synthetase family. As to quaternary structure, homodimer. Mg(2+) serves as cofactor.

The protein resides in the cytoplasm. It carries out the reaction tRNA(Lys) + L-lysine + ATP = L-lysyl-tRNA(Lys) + AMP + diphosphate. The polypeptide is Lysine--tRNA ligase (Staphylococcus saprophyticus subsp. saprophyticus (strain ATCC 15305 / DSM 20229 / NCIMB 8711 / NCTC 7292 / S-41)).